We begin with the raw amino-acid sequence, 122 residues long: MARIAGVDLPNKKRIEYGLTYIYGIGLYKSRQILDAAGISYDKRVYELSEDEAAAIRKEIQEHHVVEGDLRKQVAMDIKALMDLGSYRGLRHRKGLPVRGQKTKTNARTRKGRRKTVGAATK.

Residues 95 to 116 (GLPVRGQKTKTNARTRKGRRKT) show a composition bias toward basic residues. A disordered region spans residues 95–122 (GLPVRGQKTKTNARTRKGRRKTVGAATK).

This sequence belongs to the universal ribosomal protein uS13 family. In terms of assembly, part of the 30S ribosomal subunit. Forms a loose heterodimer with protein S19. Forms two bridges to the 50S subunit in the 70S ribosome.

Located at the top of the head of the 30S subunit, it contacts several helices of the 16S rRNA. In the 70S ribosome it contacts the 23S rRNA (bridge B1a) and protein L5 of the 50S subunit (bridge B1b), connecting the 2 subunits; these bridges are implicated in subunit movement. Contacts the tRNAs in the A and P-sites. The sequence is that of Small ribosomal subunit protein uS13 from Campylobacter concisus (strain 13826).